Consider the following 65-residue polypeptide: Large ribosomal subunit protein uL29 (65 aa).

It belongs to the universal ribosomal protein uL29 family.

The polypeptide is Large ribosomal subunit protein uL29 (Methylococcus capsulatus (strain ATCC 33009 / NCIMB 11132 / Bath)).